Consider the following 917-residue polypeptide: Protein translocase subunit SecA (917 aa).

Residues Gln-87, 105–109 (GEGKT), and Asp-516 each bind ATP. Residues Cys-901, Cys-903, Cys-912, and His-913 each coordinate Zn(2+).

This sequence belongs to the SecA family. In terms of assembly, monomer and homodimer. Part of the essential Sec protein translocation apparatus which comprises SecA, SecYEG and auxiliary proteins SecDF-YajC and YidC. Zn(2+) serves as cofactor.

It localises to the cell inner membrane. The protein resides in the cytoplasm. The enzyme catalyses ATP + H2O + cellular proteinSide 1 = ADP + phosphate + cellular proteinSide 2.. Functionally, part of the Sec protein translocase complex. Interacts with the SecYEG preprotein conducting channel. Has a central role in coupling the hydrolysis of ATP to the transfer of proteins into and across the cell membrane, serving both as a receptor for the preprotein-SecB complex and as an ATP-driven molecular motor driving the stepwise translocation of polypeptide chains across the membrane. The protein is Protein translocase subunit SecA of Acidovorax sp. (strain JS42).